We begin with the raw amino-acid sequence, 266 residues long: uncharacterized protein (266 aa).

It belongs to the chlamydial CPn_0087/CT_309/TC_0583 family.

This is an uncharacterized protein from Chlamydia pneumoniae (Chlamydophila pneumoniae).